Reading from the N-terminus, the 335-residue chain is Phosphate acyltransferase (335 aa).

This sequence belongs to the PlsX family. Homodimer. Probably interacts with PlsY.

The protein localises to the cytoplasm. The catalysed reaction is a fatty acyl-[ACP] + phosphate = an acyl phosphate + holo-[ACP]. It participates in lipid metabolism; phospholipid metabolism. In terms of biological role, catalyzes the reversible formation of acyl-phosphate (acyl-PO(4)) from acyl-[acyl-carrier-protein] (acyl-ACP). This enzyme utilizes acyl-ACP as fatty acyl donor, but not acyl-CoA. The sequence is that of Phosphate acyltransferase from Heliobacterium modesticaldum (strain ATCC 51547 / Ice1).